The following is a 212-amino-acid chain: Peptide methionine sulfoxide reductase MsrA (212 aa).

Residues 1–14 (MNSIDKTQRITQSD) are compositionally biased toward polar residues. A disordered region spans residues 1–21 (MNSIDKTQRITQSDALPGRST). The active site involves Cys-52.

Belongs to the MsrA Met sulfoxide reductase family.

It carries out the reaction L-methionyl-[protein] + [thioredoxin]-disulfide + H2O = L-methionyl-(S)-S-oxide-[protein] + [thioredoxin]-dithiol. The catalysed reaction is [thioredoxin]-disulfide + L-methionine + H2O = L-methionine (S)-S-oxide + [thioredoxin]-dithiol. Functionally, has an important function as a repair enzyme for proteins that have been inactivated by oxidation. Catalyzes the reversible oxidation-reduction of methionine sulfoxide in proteins to methionine. The chain is Peptide methionine sulfoxide reductase MsrA from Pectobacterium atrosepticum (strain SCRI 1043 / ATCC BAA-672) (Erwinia carotovora subsp. atroseptica).